The sequence spans 293 residues: MNFVTTLTYLLPHRMLSSLARHVAYCQHPLIKQWLIDTVIAKFDVNLSEAAEPDAHAYPSFNAFFTRSLKTGIRLPDPNPDTLLMPADGRISQLGPIREGRIFQAKGQSFTATELLGDTAAAAAFTNGLFATVYLSPRDYHRVHMPCTGQLLKTVHVPGRLFSVGPDAVRQIPRLFARNERLACHFDTAFGPMVLVMVGALLVSGVETVWGGVEIPAYGDRITHKDYQGRNIAIERFAEMARFNYGSTVIVLLPPNVFTLAPHLTAESPVTLGQALAHRLSLNHSTQAPTQEK.

Residues Asp-88, His-144, and Ser-247 each act as charge relay system; for autoendoproteolytic cleavage activity in the active site. Ser-247 acts as the Schiff-base intermediate with substrate; via pyruvic acid; for decarboxylase activity in catalysis. Ser-247 bears the Pyruvic acid (Ser); by autocatalysis mark.

It belongs to the phosphatidylserine decarboxylase family. PSD-B subfamily. Prokaryotic type I sub-subfamily. In terms of assembly, heterodimer of a large membrane-associated beta subunit and a small pyruvoyl-containing alpha subunit. Requires pyruvate as cofactor. In terms of processing, is synthesized initially as an inactive proenzyme. Formation of the active enzyme involves a self-maturation process in which the active site pyruvoyl group is generated from an internal serine residue via an autocatalytic post-translational modification. Two non-identical subunits are generated from the proenzyme in this reaction, and the pyruvate is formed at the N-terminus of the alpha chain, which is derived from the carboxyl end of the proenzyme. The autoendoproteolytic cleavage occurs by a canonical serine protease mechanism, in which the side chain hydroxyl group of the serine supplies its oxygen atom to form the C-terminus of the beta chain, while the remainder of the serine residue undergoes an oxidative deamination to produce ammonia and the pyruvoyl prosthetic group on the alpha chain. During this reaction, the Ser that is part of the protease active site of the proenzyme becomes the pyruvoyl prosthetic group, which constitutes an essential element of the active site of the mature decarboxylase.

It localises to the cell membrane. The catalysed reaction is a 1,2-diacyl-sn-glycero-3-phospho-L-serine + H(+) = a 1,2-diacyl-sn-glycero-3-phosphoethanolamine + CO2. The protein operates within phospholipid metabolism; phosphatidylethanolamine biosynthesis; phosphatidylethanolamine from CDP-diacylglycerol: step 2/2. In terms of biological role, catalyzes the formation of phosphatidylethanolamine (PtdEtn) from phosphatidylserine (PtdSer). In Xylella fastidiosa (strain 9a5c), this protein is Phosphatidylserine decarboxylase proenzyme.